The chain runs to 379 residues: MNNEESNAKLRFIISGGGTGGHIFPAISIADALRRRYPECEILFVGAEGRMEMERVPRSGYEIVGLPIKGLDRKHLLSNYKVAIAVIRSMRLANKTIRNFRPDMVIGVGGYASGPTLRRAHSLGIPTLIQEQNSYAGVTNKLLSRGAHKICVAYPEMDKFFSPEKIVFTGNPIRPEIEFGHPSRSESLRFFGFEQSESPVVLVVGGSLGALTINKSIADKLGKWAESGVHLIWQTGKNYIETARKAVENHPGLKCYVNDFITRMDYAYCAADLVVSRAGACSISELCLLGKPTILVPSPNVAEDHQTKNALALSTRAAAVLIPDTEAIELLTDTALSLVRDPAELSSLSEQIRTLAKPQAADRIVDEIARIVEHEKRAN.

UDP-N-acetyl-alpha-D-glucosamine is bound by residues 19–21 (TGG), N133, R174, S207, I261, and Q306.

It belongs to the glycosyltransferase 28 family. MurG subfamily.

It is found in the cell inner membrane. The catalysed reaction is di-trans,octa-cis-undecaprenyl diphospho-N-acetyl-alpha-D-muramoyl-L-alanyl-D-glutamyl-meso-2,6-diaminopimeloyl-D-alanyl-D-alanine + UDP-N-acetyl-alpha-D-glucosamine = di-trans,octa-cis-undecaprenyl diphospho-[N-acetyl-alpha-D-glucosaminyl-(1-&gt;4)]-N-acetyl-alpha-D-muramoyl-L-alanyl-D-glutamyl-meso-2,6-diaminopimeloyl-D-alanyl-D-alanine + UDP + H(+). It functions in the pathway cell wall biogenesis; peptidoglycan biosynthesis. Functionally, cell wall formation. Catalyzes the transfer of a GlcNAc subunit on undecaprenyl-pyrophosphoryl-MurNAc-pentapeptide (lipid intermediate I) to form undecaprenyl-pyrophosphoryl-MurNAc-(pentapeptide)GlcNAc (lipid intermediate II). In Porphyromonas gingivalis (strain ATCC BAA-308 / W83), this protein is UDP-N-acetylglucosamine--N-acetylmuramyl-(pentapeptide) pyrophosphoryl-undecaprenol N-acetylglucosamine transferase.